A 416-amino-acid polypeptide reads, in one-letter code: Phosphoglycerate kinase (416 aa).

The (2R)-3-phosphoglycerate site is built by Val23, Asp24, Phe25, Asn26, Gln38, Arg39, Ser62, His63, Gly65, Arg66, Leu121, Arg122, His169, and Arg170. Residue Gly213 coordinates ADP. Gly213 contacts CDP. Residues Ala214 and Lys215 each contribute to the AMP site. Ala214 is an ATP binding site. Ala214 is a binding site for Mg(2+). CDP is bound at residue Asp218. Mg(2+) is bound at residue Asp218. Residue Lys219 coordinates AMP. Lys219 is an ATP binding site. Gly237 serves as a coordination point for ADP. Residue Gly237 participates in CDP binding. Residues Gly238 and Gly312 each coordinate AMP. Gly238 and Gly312 together coordinate ATP. CDP contacts are provided by Gly337, Ala339, and Phe342. Position 342 (Phe342) interacts with ADP. Position 343 (Glu343) interacts with AMP. Glu343, Asp374, and Thr375 together coordinate ATP. Residue Asp374 coordinates Mg(2+).

The protein belongs to the phosphoglycerate kinase family. As to quaternary structure, monomer. It depends on Mg(2+) as a cofactor.

It is found in the cytoplasm. Its subcellular location is the mitochondrion. It carries out the reaction (2R)-3-phosphoglycerate + ATP = (2R)-3-phospho-glyceroyl phosphate + ADP. It participates in carbohydrate degradation; glycolysis; pyruvate from D-glyceraldehyde 3-phosphate: step 2/5. In terms of biological role, catalyzes one of the two ATP producing reactions in the glycolytic pathway via the reversible conversion of 1,3-diphosphoglycerate to 3-phosphoglycerate. Both L- and D- forms of purine and pyrimidine nucleotides can be used as substrates, but the activity is much lower on pyrimidines. Negatively regulates the biosynthesis of acetyl-CoA from pyruvate in the mitochondrion. In Funneliformis mosseae (Endomycorrhizal fungus), this protein is Phosphoglycerate kinase (PGK).